The primary structure comprises 772 residues: Alpha-xylosidase (772 aa).

D416 (nucleophile) is an active-site residue. The active site involves E419. The Proton donor role is filled by D482.

It belongs to the glycosyl hydrolase 31 family. As to quaternary structure, homohexamer.

It catalyses the reaction Hydrolysis of terminal, non-reducing alpha-D-xylose residues with release of alpha-D-xylose.. In terms of biological role, can catalyze the transfer of alpha-xylosyl residue from alpha-xyloside to xylose, glucose, mannose, fructose, maltose, isomaltose, nigerose, kojibiose, sucrose and trehalose. This Escherichia coli (strain K12) protein is Alpha-xylosidase (yicI).